A 552-amino-acid polypeptide reads, in one-letter code: Chaperonin GroEL (552 aa).

ATP-binding positions include 30–33 (TLGP), K51, 87–91 (DGTTT), G415, 479–481 (NAA), and D495.

This sequence belongs to the chaperonin (HSP60) family. As to quaternary structure, forms a cylinder of 14 subunits composed of two heptameric rings stacked back-to-back. Interacts with the co-chaperonin GroES.

The protein resides in the cytoplasm. The enzyme catalyses ATP + H2O + a folded polypeptide = ADP + phosphate + an unfolded polypeptide.. In terms of biological role, together with its co-chaperonin GroES, plays an essential role in assisting protein folding. The GroEL-GroES system forms a nano-cage that allows encapsulation of the non-native substrate proteins and provides a physical environment optimized to promote and accelerate protein folding. This is Chaperonin GroEL from Stutzerimonas stutzeri (Pseudomonas stutzeri).